The sequence spans 168 residues: G/U mismatch-specific DNA glycosylase (168 aa).

The protein belongs to the uracil-DNA glycosylase (UDG) superfamily. TDG/mug family. In terms of assembly, binds DNA as a monomer.

It localises to the cytoplasm. It catalyses the reaction Specifically hydrolyzes mismatched double-stranded DNA and polynucleotides, releasing free uracil.. Functionally, excises ethenocytosine and uracil, which can arise by alkylation or deamination of cytosine, respectively, from the corresponding mispairs with guanine in ds-DNA. It is capable of hydrolyzing the carbon-nitrogen bond between the sugar-phosphate backbone of the DNA and the mispaired base. The complementary strand guanine functions in substrate recognition. Required for DNA damage lesion repair in stationary-phase cells. The protein is G/U mismatch-specific DNA glycosylase of Salmonella gallinarum (strain 287/91 / NCTC 13346).